The following is a 202-amino-acid chain: Peptide deformylase (202 aa).

Positions 1-24 (MAGSFAQLAKNAEKKKPSISVSKE) are disordered. The Fe cation site is built by C121 and H163. E164 is an active-site residue. Fe cation is bound at residue H167.

Belongs to the polypeptide deformylase family. Fe(2+) is required as a cofactor.

It carries out the reaction N-terminal N-formyl-L-methionyl-[peptide] + H2O = N-terminal L-methionyl-[peptide] + formate. Removes the formyl group from the N-terminal Met of newly synthesized proteins. Requires at least a dipeptide for an efficient rate of reaction. N-terminal L-methionine is a prerequisite for activity but the enzyme has broad specificity at other positions. In Prochlorococcus marinus (strain NATL2A), this protein is Peptide deformylase.